A 161-amino-acid chain; its full sequence is Nucleotide-binding protein Spea_3114 (161 aa).

Belongs to the YajQ family.

Nucleotide-binding protein. The sequence is that of Nucleotide-binding protein Spea_3114 from Shewanella pealeana (strain ATCC 700345 / ANG-SQ1).